A 300-amino-acid chain; its full sequence is MYNPRCKDLDRDYFPSYHTTRFQDQPEPNLAVLEHFVRVTKQHGRELTEKQGITVDHLRYGEGRQLVDVFYSEKTTNQAPLFVFVHGGYWQEMDMSMSCSIVGPLVRRGYRVAVMDYNLCPQVTLEQLMTQFTHFLNWIFDYTEMTKVSSLTFAGHSAGAHLLAQILMRPNVITAQRSKMVWALIFLCGVYDLRELSNLESVNPKNILGLNERNIESVSPMLWEYTDVTVWNSTKIYVVAAEHDSTTFIEQSRHYADVLRKKGYKASFTLFKGYDHFDIIEETAIDDSDVSRFLRNIEIE.

The short motif at 86 to 90 is the HGGXW element; it reads HGGYW. The active-site Nucleophile is the Ser-157. Catalysis depends on residues Asp-244 and His-276.

This sequence belongs to the kynurenine formamidase family. As to quaternary structure, homodimer.

The enzyme catalyses N-formyl-L-kynurenine + H2O = L-kynurenine + formate + H(+). It participates in amino-acid degradation; L-tryptophan degradation via kynurenine pathway; L-kynurenine from L-tryptophan: step 2/2. Its function is as follows. Catalyzes the hydrolysis of N-formyl-L-kynurenine to L-kynurenine, the second step in the kynurenine pathway of tryptophan degradation. Required for elimination of toxic metabolites. This is Kynurenine formamidase (KFase) from Drosophila melanogaster (Fruit fly).